An 85-amino-acid chain; its full sequence is Large ribosomal subunit protein bL27 (85 aa).

Positions 1 to 21 are disordered; it reads MAHKKAGGSSRNGRDSEAKRL.

It belongs to the bacterial ribosomal protein bL27 family.

This Aeromonas hydrophila subsp. hydrophila (strain ATCC 7966 / DSM 30187 / BCRC 13018 / CCUG 14551 / JCM 1027 / KCTC 2358 / NCIMB 9240 / NCTC 8049) protein is Large ribosomal subunit protein bL27.